The sequence spans 299 residues: Elongation factor Ts (299 aa).

The interval 81–84 (TDFV) is involved in Mg(2+) ion dislocation from EF-Tu.

This sequence belongs to the EF-Ts family.

It is found in the cytoplasm. Associates with the EF-Tu.GDP complex and induces the exchange of GDP to GTP. It remains bound to the aminoacyl-tRNA.EF-Tu.GTP complex up to the GTP hydrolysis stage on the ribosome. This is Elongation factor Ts from Halothermothrix orenii (strain H 168 / OCM 544 / DSM 9562).